The chain runs to 225 residues: Urease accessory protein UreF (225 aa).

The protein belongs to the UreF family. As to quaternary structure, ureD, UreF and UreG form a complex that acts as a GTP-hydrolysis-dependent molecular chaperone, activating the urease apoprotein by helping to assemble the nickel containing metallocenter of UreC. The UreE protein probably delivers the nickel.

The protein localises to the cytoplasm. In terms of biological role, required for maturation of urease via the functional incorporation of the urease nickel metallocenter. This is Urease accessory protein UreF from Arthrobacter sp. (strain FB24).